The following is a 109-amino-acid chain: uncharacterized protein (109 aa).

Residues 1–25 (MKGIFLVVQLGFSIMVFLFLAAVNW) form the signal peptide. Residues 73–95 (YPVMSALMIISFLYVLAALFLLI) form a helical membrane-spanning segment.

It localises to the membrane. This is an uncharacterized protein from Bacillus subtilis (strain 168).